Consider the following 603-residue polypeptide: Translation initiation factor IF-2 (603 aa).

The region spanning 112–279 (TRPPIITIMG…NINLQAEILD (168 aa)) is the tr-type G domain. Residues 121–128 (GHVDHGKT) are G1. 121–128 (GHVDHGKT) contributes to the GTP binding site. Residues 146 to 150 (GITQH) are G2. The interval 167-170 (DTPG) is G3. GTP is bound by residues 167–171 (DTPGH) and 221–224 (NKMD). A G4 region spans residues 221-224 (NKMD). The interval 257-259 (SAL) is G5.

This sequence belongs to the TRAFAC class translation factor GTPase superfamily. Classic translation factor GTPase family. IF-2 subfamily.

The protein localises to the cytoplasm. Functionally, one of the essential components for the initiation of protein synthesis. Protects formylmethionyl-tRNA from spontaneous hydrolysis and promotes its binding to the 30S ribosomal subunits. Also involved in the hydrolysis of GTP during the formation of the 70S ribosomal complex. This chain is Translation initiation factor IF-2, found in Mycoplasmopsis pulmonis (strain UAB CTIP) (Mycoplasma pulmonis).